The sequence spans 688 residues: Glycine--tRNA ligase beta subunit (688 aa).

It belongs to the class-II aminoacyl-tRNA synthetase family. As to quaternary structure, tetramer of two alpha and two beta subunits.

It is found in the cytoplasm. It carries out the reaction tRNA(Gly) + glycine + ATP = glycyl-tRNA(Gly) + AMP + diphosphate. This chain is Glycine--tRNA ligase beta subunit, found in Geotalea uraniireducens (strain Rf4) (Geobacter uraniireducens).